A 208-amino-acid chain; its full sequence is Small ribosomal subunit protein uS4 (208 aa).

Positions 98–161 constitute an S4 RNA-binding domain; it reads RRLDNVIYRL…KESPRIKELL (64 aa).

Belongs to the universal ribosomal protein uS4 family. As to quaternary structure, part of the 30S ribosomal subunit. Contacts protein S5. The interaction surface between S4 and S5 is involved in control of translational fidelity.

Its function is as follows. One of the primary rRNA binding proteins, it binds directly to 16S rRNA where it nucleates assembly of the body of the 30S subunit. With S5 and S12 plays an important role in translational accuracy. This chain is Small ribosomal subunit protein uS4, found in Pelotomaculum thermopropionicum (strain DSM 13744 / JCM 10971 / SI).